The following is a 309-amino-acid chain: Acetylglutamate kinase (309 aa).

Substrate is bound by residues 82–83, Arg-104, and Asn-206; that span reads GG.

This sequence belongs to the acetylglutamate kinase family. ArgB subfamily.

Its subcellular location is the cytoplasm. The catalysed reaction is N-acetyl-L-glutamate + ATP = N-acetyl-L-glutamyl 5-phosphate + ADP. It participates in amino-acid biosynthesis; L-arginine biosynthesis; N(2)-acetyl-L-ornithine from L-glutamate: step 2/4. Its function is as follows. Catalyzes the ATP-dependent phosphorylation of N-acetyl-L-glutamate. The protein is Acetylglutamate kinase of Cupriavidus pinatubonensis (strain JMP 134 / LMG 1197) (Cupriavidus necator (strain JMP 134)).